The primary structure comprises 327 residues: MGGGRLPPLWLPLLIAWSEWGNCCLDAPPVVRSPCLQPVRDRNRERNPGSPQLLPYGDRLEVACIFPAHDWPEVSIRVHLCYWPEIVRSLVVDARSGQVLHNDASCYIAGGRWRFEDGGAAQRLSLSFRLITETAGTYTCVLGNETHSLATETTALVADVHDLRHSDRSCDLAFGSRSQTRYLWTPDPSRLRSINCGWEGERHRVVHYIPGTSGLLPSCEEDERELCVPFISQSIADNNCSRRHRVDGARRRYHLRRDYWLTDPKIGLLAAGSVALTSLCHLLCYWCSESYRRLNTEEENEAAEETAAGEASAVAAAAVSEEEQQRE.

The helical transmembrane segment at 266–285 threads the bilayer; sequence IGLLAAGSVALTSLCHLLCY. The disordered stretch occupies residues 297-327; sequence EEENEAAEETAAGEASAVAAAAVSEEEQQRE. Low complexity predominate over residues 305–319; sequence ETAAGEASAVAAAAV.

Belongs to the HHV-5 UL14 protein family.

It localises to the host membrane. This is an uncharacterized protein from Human cytomegalovirus (strain Merlin) (HHV-5).